The following is a 1809-amino-acid chain: Pyochelin synthetase PchF (1809 aa).

The condensation/cyclization stretch occupies residues 69–490 (FPLTPVQAAY…GLLRRLAQSP (422 aa)). An adenylation region spans residues 520-915 (FAERALLTPD…GREDDQVKIR (396 aa)). A Carrier domain is found at 1407–1488 (APADELESAL…GLAERLRSAP (82 aa)). The residue at position 1442 (S1442) is an O-(pantetheine 4'-phosphoryl)serine. The thioesterase stretch occupies residues 1584–1797 (LGRRYAEALH…FDCLGEALAQ (214 aa)).

It belongs to the NRP synthetase family. The cofactor is pantetheine 4'-phosphate.

The catalysed reaction is holo-[peptidyl-carrier protein] + L-cysteine + ATP = L-cysteinyl-[peptidyl-carrier protein] + AMP + diphosphate. It participates in siderophore biosynthesis. Involved in the biosynthesis of the siderophore pyochelin. Adenylates L-cysteine and loads it onto its peptidyl carrier domain via a thioester linkage to the phosphopanthetheine moiety. Then forms a peptide bond between the salicyl-thiazolinyl intermediate bound to the second carrier domain of PchE and the cysteine bound to its own peptidyl carrier domain to form the salicyl-thiazolinyl-cysteinyl-S-PCP2 intermediate. It subsequently cyclizes the C-terminal cysteine to form the second thiazoline heterocycle in the salicyl-thiazolinyl-thiazolinyl-S-PCP2 intermediate. When this intermediate is released by the action of a thioesterase, it produces the tricyclic acid hydroxyphenyl-thiazolyl-thiazolinyl-carboxylic acid (HPTT-COOH), an advanced intermediate containing the aryl-4,2-bis-heterocyclic skeleton of the bithiazoline class of siderophores. This Pseudomonas aeruginosa (strain UCBPP-PA14) protein is Pyochelin synthetase PchF.